The following is a 126-amino-acid chain: Large ribosomal subunit protein mL52 (126 aa).

A mitochondrion-targeting transit peptide spans 1–28; it reads MLKITKICLASSATSTAQRSIALTAPRA.

Belongs to the mitochondrion-specific ribosomal protein mL52 family. In terms of assembly, component of the mitochondrial ribosome large subunit (39S) which comprises a 16S rRNA and about 50 distinct proteins.

Its subcellular location is the mitochondrion. The polypeptide is Large ribosomal subunit protein mL52 (mRpL52) (Drosophila melanogaster (Fruit fly)).